The primary structure comprises 498 residues: GPI mannosyltransferase 4 (498 aa).

Residues 11 to 31 (FYLLTIVFRFVFTLSDSYIHP) traverse the membrane as a helical segment. Residue N47 is glycosylated (N-linked (GlcNAc...) asparagine). The helical transmembrane segment at 63 to 83 (SLAPLYFIYGPLLYFIKFFKL) threads the bilayer. N-linked (GlcNAc...) asparagine glycosylation occurs at N84. The next 9 helical transmembrane spans lie at 96–116 (LQISILSWIITDFCLYWMLPS), 140–160 (LFSNSIETLLLLVTILLIDDL), 189–209 (LGIFNRITFPAFLILPGWFVM), 222–242 (LVMGFFSTTALLILVDTILFG), 247–267 (VVAEPFNVSSYIIAPLNNLLY), 282–302 (YYTHILVNMPQILGPGLIFFV), 310–330 (TPFLTVISGLLFLSVIPHQEL), 332–348 (FLIPLLPLACCSFDFTL), and 350–370 (WVQPWMLYTWYIFNIFMSILM). N-linked (GlcNAc...) asparagine glycans are attached at residues N408 and N473.

It belongs to the glycosyltransferase 22 family. PIGZ subfamily.

It localises to the endoplasmic reticulum membrane. The protein operates within glycolipid biosynthesis; glycosylphosphatidylinositol-anchor biosynthesis. Alpha-1,2-mannosyltransferase involved in glycosylphosphatidylinositol-anchor biosynthesis. Transfers a fourth mannose to trimannosyl-GPIs during GPI precursor assembly. The presence of a fourth mannose in GPI is essential in fungi. This chain is GPI mannosyltransferase 4 (SMP3), found in Candida albicans (strain SC5314 / ATCC MYA-2876) (Yeast).